Here is a 210-residue protein sequence, read N- to C-terminus: Thymidylate kinase (210 aa).

Position 10–17 (10–17) interacts with ATP; sequence GLEGAGKS.

It belongs to the thymidylate kinase family.

It carries out the reaction dTMP + ATP = dTDP + ADP. In terms of biological role, phosphorylation of dTMP to form dTDP in both de novo and salvage pathways of dTTP synthesis. The protein is Thymidylate kinase of Haemophilus influenzae (strain PittGG).